The following is a 117-amino-acid chain: Large ribosomal subunit protein uL18 (117 aa).

The protein belongs to the universal ribosomal protein uL18 family. In terms of assembly, part of the 50S ribosomal subunit; part of the 5S rRNA/L5/L18/L25 subcomplex. Contacts the 5S and 23S rRNAs.

Its function is as follows. This is one of the proteins that bind and probably mediate the attachment of the 5S RNA into the large ribosomal subunit, where it forms part of the central protuberance. This is Large ribosomal subunit protein uL18 from Aster yellows witches'-broom phytoplasma (strain AYWB).